A 436-amino-acid chain; its full sequence is ATP-dependent 6-phosphofructokinase (436 aa).

ATP-binding positions include Gly90, 155 to 156 (RG), and 180 to 183 (GDGT). Asp181 provides a ligand contact to Mg(2+). Residues 209–211 (TID), 254–256 (MGR), Glu307, and 362–365 (YMIR) contribute to the substrate site. Asp211 (proton acceptor) is an active-site residue.

Belongs to the phosphofructokinase type A (PFKA) family. PPi-dependent PFK group II subfamily. Atypical ATP-dependent clade 'X' sub-subfamily. As to quaternary structure, homodimer. Aggregates to a homotetramer after activation by ATP. The cofactor is Mg(2+).

Its subcellular location is the cytoplasm. It catalyses the reaction beta-D-fructose 6-phosphate + ATP = beta-D-fructose 1,6-bisphosphate + ADP + H(+). The protein operates within carbohydrate degradation; glycolysis; D-glyceraldehyde 3-phosphate and glycerone phosphate from D-glucose: step 3/4. With respect to regulation, activated by nucleoside triphosphates. Inhibited by phosphoenolpyruvate. EDTA and biphosphonates play the role of inhibitors of kinase activity. Catalyzes the phosphorylation of D-fructose 6-phosphate to fructose 1,6-bisphosphate by ATP, the first committing step of glycolysis. This is ATP-dependent 6-phosphofructokinase (PPi-PFK) from Entamoeba histolytica (strain ATCC 30459 / HM-1:IMSS / ABRM).